The chain runs to 331 residues: Hydroxyacylglutathione hydrolase 1, mitochondrial (331 aa).

Residues 1–76 constitute a mitochondrion transit peptide; sequence MPVISKASST…HFCSISNMPS (76 aa). Zn(2+)-binding residues include His131 and His133. Fe cation-binding residues include Asp135 and His136. Zn(2+) is bound by residues His189 and Asp208. Asp208 provides a ligand contact to Fe cation. Residue 246–248 participates in substrate binding; sequence REN.

The protein belongs to the metallo-beta-lactamase superfamily. Glyoxalase II family. The cofactor is Fe(2+). Requires Fe(3+) as cofactor. It depends on Zn(2+) as a cofactor. As to expression, mainly expressed in roots, flowers and flower buds. Also detected in leaves.

The protein localises to the mitochondrion. It carries out the reaction an S-(2-hydroxyacyl)glutathione + H2O = a 2-hydroxy carboxylate + glutathione + H(+). The protein operates within secondary metabolite metabolism; methylglyoxal degradation; (R)-lactate from methylglyoxal: step 2/2. In terms of biological role, thiolesterase that catalyzes the hydrolysis of S-D-lactoyl-glutathione to form glutathione and D-lactic acid. The chain is Hydroxyacylglutathione hydrolase 1, mitochondrial (GLX2-1) from Arabidopsis thaliana (Mouse-ear cress).